We begin with the raw amino-acid sequence, 261 residues long: ATP synthase subunit a (261 aa).

The next 6 membrane-spanning stretches (helical) occupy residues 45–65 (ITNV…ILVL), 107–127 (VMTL…PLSF), 133–153 (MAVT…LGFM), 162–182 (MFWV…IEVI), 209–229 (IAGF…VTAI), and 232–252 (LELL…CVYL).

The protein belongs to the ATPase A chain family. As to quaternary structure, F-type ATPases have 2 components, CF(1) - the catalytic core - and CF(0) - the membrane proton channel. CF(1) has five subunits: alpha(3), beta(3), gamma(1), delta(1), epsilon(1). CF(0) has four main subunits: a, b, b' and c.

The protein localises to the cell inner membrane. In terms of biological role, key component of the proton channel; it plays a direct role in the translocation of protons across the membrane. The protein is ATP synthase subunit a of Cereibacter sphaeroides (strain ATCC 17029 / ATH 2.4.9) (Rhodobacter sphaeroides).